The sequence spans 396 residues: NADH-quinone oxidoreductase subunit D (396 aa).

The protein belongs to the complex I 49 kDa subunit family. In terms of assembly, NDH-1 is composed of 14 different subunits. Subunits NuoB, C, D, E, F, and G constitute the peripheral sector of the complex.

The protein resides in the cell inner membrane. It carries out the reaction a quinone + NADH + 5 H(+)(in) = a quinol + NAD(+) + 4 H(+)(out). Its function is as follows. NDH-1 shuttles electrons from NADH, via FMN and iron-sulfur (Fe-S) centers, to quinones in the respiratory chain. The immediate electron acceptor for the enzyme in this species is believed to be ubiquinone. Couples the redox reaction to proton translocation (for every two electrons transferred, four hydrogen ions are translocated across the cytoplasmic membrane), and thus conserves the redox energy in a proton gradient. This is NADH-quinone oxidoreductase subunit D from Methylorubrum populi (strain ATCC BAA-705 / NCIMB 13946 / BJ001) (Methylobacterium populi).